Reading from the N-terminus, the 820-residue chain is Trimethylamine-N-oxide reductase (820 aa).

The segment at residues 1–33 is a signal peptide (tat-type signal); sequence MAITRRSFLKGVATTSAASVIGPSLLASASANA. Position 179 (serine 179) interacts with Mo-bis(molybdopterin guanine dinucleotide).

It belongs to the prokaryotic molybdopterin-containing oxidoreductase family. The cofactor is Mo-bis(molybdopterin guanine dinucleotide). Post-translationally, predicted to be exported by the Tat system. The position of the signal peptide cleavage has not been experimentally proven.

It localises to the periplasm. It catalyses the reaction trimethylamine + 2 Fe(III)-[cytochrome c] + H2O = trimethylamine N-oxide + 2 Fe(II)-[cytochrome c] + 3 H(+). In terms of biological role, reduces trimethylamine-N-oxide (TMAO) into trimethylamine; an anaerobic reaction coupled to energy-yielding reactions. The sequence is that of Trimethylamine-N-oxide reductase (torA) from Vibrio vulnificus (strain CMCP6).